A 463-amino-acid chain; its full sequence is Retinoic acid receptor RXR-gamma (463 aa).

Positions 1–138 (MYGNYSHFMK…TSPGSLVKHI (138 aa)) are modulating. Positions 18 to 53 (SPGHTGSTSMSPSAALSTGKPMDSHPSYTDTPVSAP) are disordered. A compositionally biased stretch (polar residues) spans 21–33 (HTGSTSMSPSAAL). Positions 136 to 211 (KHICAICGDR…MGMKREAVQE (76 aa)) form a DNA-binding region, nuclear receptor. 2 consecutive NR C4-type zinc fingers follow at residues 139–159 (CAIC…CEGC) and 175–199 (CRDN…YQKC). The tract at residues 205-230 (KREAVQEERQRSRERAESEAECATSG) is hinge. An NR LBD domain is found at 231–459 (HEDMPVERIL…TFLMEMLETP (229 aa)).

This sequence belongs to the nuclear hormone receptor family. NR2 subfamily. In terms of assembly, homodimer. Heterodimer with a RAR molecule. Binds DNA preferentially as a RAR/RXR heterodimer. Interacts with RARA. Post-translationally, acetylated by EP300. In terms of tissue distribution, expressed in aortic endothelial cells (at protein level).

It localises to the nucleus. It is found in the cytoplasm. Receptor for retinoic acid. Retinoic acid receptors bind as heterodimers to their target response elements in response to their ligands, all-trans or 9-cis retinoic acid, and regulate gene expression in various biological processes. The RAR/RXR heterodimers bind to the retinoic acid response elements (RARE) composed of tandem 5'-AGGTCA-3' sites known as DR1-DR5. The high affinity ligand for RXRs is 9-cis retinoic acid. The sequence is that of Retinoic acid receptor RXR-gamma (RXRG) from Homo sapiens (Human).